Reading from the N-terminus, the 566-residue chain is CTP synthase (566 aa).

Positions 1–282 (MSIKRAQLGG…DAYIIDQLGL (282 aa)) are amidoligase domain. Ser23 lines the CTP pocket. Ser23 lines the UTP pocket. Residues 24–29 (SLGKGL) and Asp81 contribute to the ATP site. Mg(2+)-binding residues include Asp81 and Glu156. CTP is bound by residues 163–165 (DIE), 203–208 (KTKPTQ), and Lys239. UTP-binding positions include 203–208 (KTKPTQ) and Lys239. The Glutamine amidotransferase type-1 domain maps to 308-556 (TIGLVGKYID…IGAALDRQKA (249 aa)). Residue Gly371 coordinates L-glutamine. The active-site Nucleophile; for glutamine hydrolysis is the Cys398. L-glutamine is bound by residues 399–402 (LGLQ), Glu422, and Arg482. Active-site residues include His529 and Glu531.

Belongs to the CTP synthase family. As to quaternary structure, homotetramer.

The catalysed reaction is UTP + L-glutamine + ATP + H2O = CTP + L-glutamate + ADP + phosphate + 2 H(+). The enzyme catalyses L-glutamine + H2O = L-glutamate + NH4(+). It carries out the reaction UTP + NH4(+) + ATP = CTP + ADP + phosphate + 2 H(+). It participates in pyrimidine metabolism; CTP biosynthesis via de novo pathway; CTP from UDP: step 2/2. With respect to regulation, allosterically activated by GTP, when glutamine is the substrate; GTP has no effect on the reaction when ammonia is the substrate. The allosteric effector GTP functions by stabilizing the protein conformation that binds the tetrahedral intermediate(s) formed during glutamine hydrolysis. Inhibited by the product CTP, via allosteric rather than competitive inhibition. In terms of biological role, catalyzes the ATP-dependent amination of UTP to CTP with either L-glutamine or ammonia as the source of nitrogen. Regulates intracellular CTP levels through interactions with the four ribonucleotide triphosphates. The sequence is that of CTP synthase from Leifsonia xyli subsp. xyli (strain CTCB07).